The following is a 491-amino-acid chain: Aspartyl/glutamyl-tRNA(Asn/Gln) amidotransferase subunit B (491 aa).

The protein belongs to the GatB/GatE family. GatB subfamily. Heterotrimer of A, B and C subunits.

The catalysed reaction is L-glutamyl-tRNA(Gln) + L-glutamine + ATP + H2O = L-glutaminyl-tRNA(Gln) + L-glutamate + ADP + phosphate + H(+). It catalyses the reaction L-aspartyl-tRNA(Asn) + L-glutamine + ATP + H2O = L-asparaginyl-tRNA(Asn) + L-glutamate + ADP + phosphate + 2 H(+). In terms of biological role, allows the formation of correctly charged Asn-tRNA(Asn) or Gln-tRNA(Gln) through the transamidation of misacylated Asp-tRNA(Asn) or Glu-tRNA(Gln) in organisms which lack either or both of asparaginyl-tRNA or glutaminyl-tRNA synthetases. The reaction takes place in the presence of glutamine and ATP through an activated phospho-Asp-tRNA(Asn) or phospho-Glu-tRNA(Gln). This Paraburkholderia phymatum (strain DSM 17167 / CIP 108236 / LMG 21445 / STM815) (Burkholderia phymatum) protein is Aspartyl/glutamyl-tRNA(Asn/Gln) amidotransferase subunit B.